Here is a 68-residue protein sequence, read N- to C-terminus: Large ribosomal subunit protein bL35 (68 aa).

This sequence belongs to the bacterial ribosomal protein bL35 family.

The protein is Large ribosomal subunit protein bL35 of Rickettsia typhi (strain ATCC VR-144 / Wilmington).